Reading from the N-terminus, the 542-residue chain is Chaperonin GroEL (542 aa).

Residues 30–33 (TLGP), lysine 51, 87–91 (DGTTT), glycine 415, 480–482 (NAA), and aspartate 496 each bind ATP.

The protein belongs to the chaperonin (HSP60) family. Forms a cylinder of 14 subunits composed of two heptameric rings stacked back-to-back. Interacts with the co-chaperonin GroES.

It localises to the cytoplasm. It catalyses the reaction ATP + H2O + a folded polypeptide = ADP + phosphate + an unfolded polypeptide.. Its function is as follows. Together with its co-chaperonin GroES, plays an essential role in assisting protein folding. The GroEL-GroES system forms a nano-cage that allows encapsulation of the non-native substrate proteins and provides a physical environment optimized to promote and accelerate protein folding. The sequence is that of Chaperonin GroEL from Tremblaya princeps.